The chain runs to 478 residues: MNIQKYGLSSDISIKLKTKVDKIKEKKEEVLKLNTSTFYGKAEVRLINDVSILDGINKSVVRYDTGKISEGLLHQEEMKRGVEKRPNCSETRKTHFHDNCVGLLYNILRLFYLIDINFDEYDAYATYFQDNALLVINVHLFGDQPFSSLENFVVQPVSVNVICKPELNETFNSNSNYLKVGNTIDEHFLKELVNGTQDIENIIVRLVKDNRLFTQFDIAYGMVAQVFMQLKPFLVEGTYWIAEPLLMNIPELKTQRGRYPSLLDGHLWKLTNSLKLLLKIASYTQKYLLSIEKYSEEREKKMLLNGEINESSGLLHDVVLAAELFNVKHASYYNVHAGLDRFQFLRKPLKSLVMFTDVVKERDGTCDFCGTYFEDSRMSTSYLCDENRKGENRKLEIRDLVPYLYPVLLRGVLSLPVFESRLKFAAKVPIYPKGPLYTTDTHTYNYLMNCFVPMNEEQVLSACYRFFAKSAENELFEA.

This is an uncharacterized protein from Schizosaccharomyces pombe (strain 972 / ATCC 24843) (Fission yeast).